The sequence spans 243 residues: Probable transcriptional regulatory protein LGAS_1276 (243 aa).

A disordered region spans residues 1–22 (MSGHSKWHNIQGRKNAQDAKRG).

It belongs to the TACO1 family.

The protein localises to the cytoplasm. The sequence is that of Probable transcriptional regulatory protein LGAS_1276 from Lactobacillus gasseri (strain ATCC 33323 / DSM 20243 / BCRC 14619 / CIP 102991 / JCM 1131 / KCTC 3163 / NCIMB 11718 / NCTC 13722 / AM63).